The following is a 398-amino-acid chain: Argininosuccinate synthase (398 aa).

8–16 is an ATP binding site; the sequence is AYSGGLDTS. L-citrulline is bound at residue Tyr87. Residue Gly117 participates in ATP binding. L-aspartate-binding residues include Thr119, Asn123, and Asp124. Asn123 contacts L-citrulline. L-citrulline is bound by residues Arg127, Ser175, Glu260, and Tyr272.

It belongs to the argininosuccinate synthase family. Type 1 subfamily. As to quaternary structure, homotetramer.

It localises to the cytoplasm. It catalyses the reaction L-citrulline + L-aspartate + ATP = 2-(N(omega)-L-arginino)succinate + AMP + diphosphate + H(+). Its pathway is amino-acid biosynthesis; L-arginine biosynthesis; L-arginine from L-ornithine and carbamoyl phosphate: step 2/3. The protein is Argininosuccinate synthase of Mycobacterium avium (strain 104).